Here is a 327-residue protein sequence, read N- to C-terminus: Mitochondrial substrate carrier family protein A (327 aa).

Residues 1–36 (MVINNQNNNNQNNNQNNNNKNDNLNNSTTTTTTTAT) are disordered. Over 1–48 (MVINNQNNNNQNNNQNNNNKNDNLNNSTTTTTTTATTTKSSTLFHSND) the chain is Mitochondrial intermembrane. 3 Solcar repeats span residues 43–132 (LFHS…FKRM), 140–224 (ISVI…IKEK), and 233–323 (PPLY…AITL). Residues 49–66 (FFSGLIAGIVSRTLTAPL) form a helical membrane-spanning segment. Residues 67 to 106 (ERIKILNQVEVILKDGTKYNRIIPAFKVIIKEEGIAGLFR) are Mitochondrial matrix-facing. The chain crosses the membrane as a helical span at residues 107–127 (GNFVNIIKAGPQSAIRFYSYG). Over 128–145 (AFKRMASEPDGSISVINR) the chain is Mitochondrial intermembrane. The chain crosses the membrane as a helical span at residues 146-166 (MWAGASSGVVSVALTHPLDVI). Residues 167–192 (KTHITVIAPTAATIKNVTKGIYRDLG) lie on the Mitochondrial matrix side of the membrane. Residues 193–213 (IIGFFRGLSAGILNIAPFAAL) form a helical membrane-spanning segment. The Mitochondrial intermembrane portion of the chain corresponds to 214-238 (NFTFYETIKEKTQQYILKSPPLYAP). A helical membrane pass occupies residues 239-259 (SIYGAISGGLTMTILYPLDVV). Over 260 to 303 (KRRIMLQHFDRNQLPIYKNFIDAIIKITKTEGISALYKGIRPAY) the chain is Mitochondrial matrix. A helical membrane pass occupies residues 304-324 (LKVIPTVSINFLIYEGAITLF). Residues 325-327 (EKK) lie on the Mitochondrial intermembrane side of the membrane.

The protein belongs to the mitochondrial carrier (TC 2.A.29) family.

Its subcellular location is the mitochondrion inner membrane. In terms of biological role, calcium-dependent mitochondrial solute carrier. Mitochondrial solute carriers shuttle metabolites, nucleotides, and cofactors through the mitochondrial inner membrane. The protein is Mitochondrial substrate carrier family protein A (mcfA) of Dictyostelium discoideum (Social amoeba).